A 211-amino-acid polypeptide reads, in one-letter code: Orotate phosphoribosyltransferase (211 aa).

A 5-phospho-alpha-D-ribose 1-diphosphate-binding site is contributed by K26. 34–35 (FF) serves as a coordination point for orotate. 5-phospho-alpha-D-ribose 1-diphosphate contacts are provided by residues 72–73 (YK), R98, K99, K102, H104, and 123–131 (DDVITAGTA). Orotate contacts are provided by T127 and R155.

This sequence belongs to the purine/pyrimidine phosphoribosyltransferase family. PyrE subfamily. As to quaternary structure, homodimer. It depends on Mg(2+) as a cofactor.

The catalysed reaction is orotidine 5'-phosphate + diphosphate = orotate + 5-phospho-alpha-D-ribose 1-diphosphate. It functions in the pathway pyrimidine metabolism; UMP biosynthesis via de novo pathway; UMP from orotate: step 1/2. Catalyzes the transfer of a ribosyl phosphate group from 5-phosphoribose 1-diphosphate to orotate, leading to the formation of orotidine monophosphate (OMP). This is Orotate phosphoribosyltransferase from Legionella pneumophila (strain Lens).